The sequence spans 347 residues: Single-pass membrane and coiled-coil domain-containing protein 2 (347 aa).

Positions 1 to 89 (MMSLQLGTAG…PPSKPDEQEV (89 aa)) are disordered. Composition is skewed to basic and acidic residues over residues 10 to 21 (GKERQLAEKSRD), 36 to 51 (EMDH…DKPS), and 60 to 86 (YKMD…KPDE). The stretch at 139–238 (DWLERINNII…MNVLNSKLEM (100 aa)) forms a coiled coil. The residue at position 178 (S178) is a Phosphoserine. Positions 243 to 274 (GSDADSHNSEDVDTEQEEPLVPEASPSLSASP) are disordered. Over residues 253-262 (DVDTEQEEPL) the composition is skewed to acidic residues. Over residues 263-273 (VPEASPSLSAS) the composition is skewed to low complexity. The chain crosses the membrane as a helical span at residues 288-308 (LFVIVYVVTITGLSCYILFVD).

The protein localises to the membrane. The chain is Single-pass membrane and coiled-coil domain-containing protein 2 (Smco2) from Mus musculus (Mouse).